A 96-amino-acid polypeptide reads, in one-letter code: Co-chaperonin GroES (96 aa).

The protein belongs to the GroES chaperonin family. As to quaternary structure, heptamer of 7 subunits arranged in a ring. Interacts with the chaperonin GroEL.

Its subcellular location is the cytoplasm. Together with the chaperonin GroEL, plays an essential role in assisting protein folding. The GroEL-GroES system forms a nano-cage that allows encapsulation of the non-native substrate proteins and provides a physical environment optimized to promote and accelerate protein folding. GroES binds to the apical surface of the GroEL ring, thereby capping the opening of the GroEL channel. This chain is Co-chaperonin GroES, found in Methylibium petroleiphilum (strain ATCC BAA-1232 / LMG 22953 / PM1).